Here is a 742-residue protein sequence, read N- to C-terminus: Phosphoribosylformylglycinamidine synthase subunit PurL (742 aa).

Residue H54 is part of the active site. Positions 57 and 96 each coordinate ATP. Position 98 (E98) interacts with Mg(2+). Residues 99–102 (SHNH) and R121 each bind substrate. The active-site Proton acceptor is H100. D122 provides a ligand contact to Mg(2+). A substrate-binding site is contributed by Q245. D273 contributes to the Mg(2+) binding site. 317-319 (ESQ) provides a ligand contact to substrate. ATP-binding residues include D500 and G537. N538 contacts Mg(2+). Residue S540 participates in substrate binding.

It belongs to the FGAMS family. In terms of assembly, monomer. Part of the FGAM synthase complex composed of 1 PurL, 1 PurQ and 2 PurS subunits.

It localises to the cytoplasm. It catalyses the reaction N(2)-formyl-N(1)-(5-phospho-beta-D-ribosyl)glycinamide + L-glutamine + ATP + H2O = 2-formamido-N(1)-(5-O-phospho-beta-D-ribosyl)acetamidine + L-glutamate + ADP + phosphate + H(+). It functions in the pathway purine metabolism; IMP biosynthesis via de novo pathway; 5-amino-1-(5-phospho-D-ribosyl)imidazole from N(2)-formyl-N(1)-(5-phospho-D-ribosyl)glycinamide: step 1/2. Part of the phosphoribosylformylglycinamidine synthase complex involved in the purines biosynthetic pathway. Catalyzes the ATP-dependent conversion of formylglycinamide ribonucleotide (FGAR) and glutamine to yield formylglycinamidine ribonucleotide (FGAM) and glutamate. The FGAM synthase complex is composed of three subunits. PurQ produces an ammonia molecule by converting glutamine to glutamate. PurL transfers the ammonia molecule to FGAR to form FGAM in an ATP-dependent manner. PurS interacts with PurQ and PurL and is thought to assist in the transfer of the ammonia molecule from PurQ to PurL. The protein is Phosphoribosylformylglycinamidine synthase subunit PurL of Geobacillus sp. (strain WCH70).